Reading from the N-terminus, the 283-residue chain is uncharacterized protein (283 aa).

The protein belongs to the glycosyltransferase 2 family. WaaE/KdtX subfamily.

This is an uncharacterized protein from Rickettsia felis (strain ATCC VR-1525 / URRWXCal2) (Rickettsia azadi).